We begin with the raw amino-acid sequence, 378 residues long: Glutamate 5-kinase (378 aa).

Lys-20 is a binding site for ATP. 3 residues coordinate substrate: Ser-60, Asp-147, and Asn-159. ATP is bound by residues Thr-179–Asp-180 and Thr-221–Lys-227. In terms of domain architecture, PUA spans Ala-286–Glu-364.

It belongs to the glutamate 5-kinase family.

Its subcellular location is the cytoplasm. The enzyme catalyses L-glutamate + ATP = L-glutamyl 5-phosphate + ADP. Its pathway is amino-acid biosynthesis; L-proline biosynthesis; L-glutamate 5-semialdehyde from L-glutamate: step 1/2. Catalyzes the transfer of a phosphate group to glutamate to form L-glutamate 5-phosphate. This is Glutamate 5-kinase from Photobacterium profundum (strain SS9).